The following is a 384-amino-acid chain: Mitogen-activated protein kinase homolog 1 (384 aa).

One can recognise a Protein kinase domain in the interval 32-319; the sequence is YVPIKPIGRG…VMEALQHPYM (288 aa). ATP contacts are provided by residues 38 to 46 and K61; that span reads IGRGAYGIV. Catalysis depends on D158, which acts as the Proton acceptor. A Phosphothreonine modification is found at T191. The TXY signature appears at 191 to 193; sequence TEY. Position 193 is a phosphotyrosine (Y193).

This sequence belongs to the protein kinase superfamily. CMGC Ser/Thr protein kinase family. MAP kinase subfamily. It depends on Mg(2+) as a cofactor. Post-translationally, dually phosphorylated on Thr-191 and Tyr-193, which activates the enzyme. In terms of tissue distribution, expressed in vegetative organs such as leaf, root, or stem. In the reproductive organs, it is found in the ovary, but not in the stamen.

The catalysed reaction is L-seryl-[protein] + ATP = O-phospho-L-seryl-[protein] + ADP + H(+). The enzyme catalyses L-threonyl-[protein] + ATP = O-phospho-L-threonyl-[protein] + ADP + H(+). With respect to regulation, activated by tyrosine and threonine phosphorylation. This Petunia hybrida (Petunia) protein is Mitogen-activated protein kinase homolog 1 (MPK1).